The sequence spans 254 residues: Vitamin B12 import ATP-binding protein BtuD (254 aa).

The 239-residue stretch at 1–239 (MHINHISVGN…ENLQQVFETP (239 aa)) folds into the ABC transporter domain. 29 to 36 (GPNGSGKS) contacts ATP.

Belongs to the ABC transporter superfamily. Vitamin B12 importer (TC 3.A.1.13.1) family. The complex is composed of two ATP-binding proteins (BtuD), two transmembrane proteins (BtuC) and a solute-binding protein (BtuF).

The protein resides in the cell inner membrane. It catalyses the reaction an R-cob(III)alamin(out) + ATP + H2O = an R-cob(III)alamin(in) + ADP + phosphate + H(+). In terms of biological role, part of the ABC transporter complex BtuCDF involved in vitamin B12 import. Responsible for energy coupling to the transport system. The polypeptide is Vitamin B12 import ATP-binding protein BtuD (Vibrio vulnificus (strain YJ016)).